The chain runs to 166 residues: Peptide deformylase (166 aa).

Fe cation is bound by residues cysteine 88 and histidine 130. Glutamate 131 is a catalytic residue. Fe cation is bound at residue histidine 134.

It belongs to the polypeptide deformylase family. It depends on Fe(2+) as a cofactor.

It catalyses the reaction N-terminal N-formyl-L-methionyl-[peptide] + H2O = N-terminal L-methionyl-[peptide] + formate. Its function is as follows. Removes the formyl group from the N-terminal Met of newly synthesized proteins. Requires at least a dipeptide for an efficient rate of reaction. N-terminal L-methionine is a prerequisite for activity but the enzyme has broad specificity at other positions. This chain is Peptide deformylase, found in Thermoanaerobacter sp. (strain X514).